The following is a 947-amino-acid chain: MKGPRGSRSGRNGSPRRLVIVESPTKARKLSGYLGSAYIVESSRGHIRDLPRTAADVPAKFKSEPWARLGVNVDADFEPLYIITPEKKSTVTELKGLLQGVDELYLATDGDREGEAIAWHLMQTLKPRVPVKRMVFHEITEHAILAAAAHPRELDIDLVDAQETRRILDRLYGYEVSPVLWKKVAPKLSAGRVQSVATRIIVQRERDRMAFCSAVYWDIVAKLDASVSDPTAQPLTFVARLTAVDGLRVATGRDFGAMGTLRGDCEVSKIIVLDDLTATTLAAGLRGAQLTVASAEEKLYTRRPYPPFMTSTLQQEAGRKLRFSAERTMSIAQRLYENGYITYMRTDSTTLSESAINAARTQARQLYGEEYVSDSPRQYTRKVKNAQEAHEAIRPAGETFATPDAVCNELDGDEFRIYELVWRRTVASQMADARGTTLSLRIEGRAGEQHVVFSASGRTLTFPGFLKAYVETVDELAGGEADDAERRLPHLTSGQLLDVIDLTPDGHATNPPARYTEASLVKALEELGIGRPSTYSSIIKTVQDRGYVQKKGSALVPSWVAFAVTGLLEQHFGRLVDYDFTAAMEDELDEIANGNEQRTNWLNNFYFGGNHGVSDSIARSGGLKKLVGVNIEGIDAREVNSIKLFDDEHGRPVYVRVGKTGPYLERLLAGDDGELTPQRANLNGTLTPDELTLEVAEELFATPHEGRVLGVDPETGHEIVAKDGRYGPYVTEVLPKHDDDYGAADQGTKKTKKGRRASASQGPKPRTGSLLRSMDLQTITLEDALKLLLLPRVVGVDPASGEEITAQNGRYGPYLKRGKDSRPLTTEDQMFIITLDEALKIYAEPKRAGRQSTSPPPLRELGTDPTSGKPMLIKDGRFGPYVTDGETNASLRKGDDVVSITDERAAELLADRRARGPVKRPAKKARKVPAKKAARLAPARGISQSPR.

A Toprim domain is found at 16-140 (RRLVIVESPT…VKRMVFHEIT (125 aa)). 2 residues coordinate Mg(2+): Glu22 and Asp109. The Topo IA-type catalytic domain occupies 155–614 (DIDLVDAQET…FYFGGNHGVS (460 aa)). An interaction with DNA region spans residues 189–194 (SAGRVQ). Tyr343 serves as the catalytic O-(5'-phospho-DNA)-tyrosine intermediate. 3 disordered regions span residues 733–771 (VLPK…GSLL), 846–888 (KRAG…GETN), and 910–947 (ADRR…QSPR). A compositionally biased stretch (basic residues) spans 915 to 934 (RGPVKRPAKKARKVPAKKAA).

The protein belongs to the type IA topoisomerase family. As to quaternary structure, monomer. It depends on Mg(2+) as a cofactor.

It carries out the reaction ATP-independent breakage of single-stranded DNA, followed by passage and rejoining.. Releases the supercoiling and torsional tension of DNA, which is introduced during the DNA replication and transcription, by transiently cleaving and rejoining one strand of the DNA duplex. Introduces a single-strand break via transesterification at a target site in duplex DNA. The scissile phosphodiester is attacked by the catalytic tyrosine of the enzyme, resulting in the formation of a DNA-(5'-phosphotyrosyl)-enzyme intermediate and the expulsion of a 3'-OH DNA strand. The free DNA strand then undergoes passage around the unbroken strand, thus removing DNA supercoils. Finally, in the religation step, the DNA 3'-OH attacks the covalent intermediate to expel the active-site tyrosine and restore the DNA phosphodiester backbone. This is DNA topoisomerase 1 from Mycobacterium leprae (strain TN).